The chain runs to 442 residues: DNA topoisomerase medium subunit (442 aa).

In terms of domain architecture, Topo IIA-type catalytic spans 29 to 438 (IPNMIDGFKP…DVVTEYTKDL (410 aa)). The active-site O-(5'-phospho-DNA)-tyrosine intermediate is tyrosine 117.

This sequence belongs to the type II topoisomerase family. Part of the DNA topoisomerase complex made of gp39, gp52 and gp60. Mg(2+) serves as cofactor.

The catalysed reaction is ATP-dependent breakage, passage and rejoining of double-stranded DNA.. Its function is as follows. Medium subunit of the DNA topoisomerase that untwists superhelical DNA. Controls topological states of double-stranded DNA by transient breakage and subsequent rejoining of DNA strands. This chain is DNA topoisomerase medium subunit (52), found in Enterobacteria phage T4 (Bacteriophage T4).